Here is a 318-residue protein sequence, read N- to C-terminus: Isoflavone reductase (318 aa).

Residues 11–17 (GPTGAIG), Arg-36, and Lys-44 each bind NADP(+). Lys-144 serves as the catalytic Proton acceptor. Position 148 (Arg-148) interacts with NADP(+).

The protein belongs to the NmrA-type oxidoreductase family. Isoflavone reductase subfamily.

It catalyses the reaction (3R)-vestitone + NADP(+) = 2'-hydroxyformononetin + NADPH + 2 H(+). It participates in phytoalexin biosynthesis; pterocarpan phytoalexin biosynthesis. In terms of biological role, reduces achiral isoflavones to chiral isoflavanones during the biosynthesis of chiral pterocarpan phytoalexins. The reduction product is a third isomer, which represents the penultimate intermediate in the synthesis of the phytoalexin (-)-medicarpin, the major phytoalexin in Alfalfa. The protein is Isoflavone reductase of Medicago sativa (Alfalfa).